A 78-amino-acid polypeptide reads, in one-letter code: Translation initiation factor IF-1, chloroplastic (78 aa).

The region spanning 1-72 is the S1-like domain; it reads MKKQNLIEME…TKGRITYRLR (72 aa).

This sequence belongs to the IF-1 family. As to quaternary structure, component of the 30S ribosomal translation pre-initiation complex which assembles on the 30S ribosome in the order IF-2 and IF-3, IF-1 and N-formylmethionyl-tRNA(fMet); mRNA recruitment can occur at any time during PIC assembly.

The protein resides in the plastid. It localises to the chloroplast. Its function is as follows. One of the essential components for the initiation of protein synthesis. Stabilizes the binding of IF-2 and IF-3 on the 30S subunit to which N-formylmethionyl-tRNA(fMet) subsequently binds. Helps modulate mRNA selection, yielding the 30S pre-initiation complex (PIC). Upon addition of the 50S ribosomal subunit IF-1, IF-2 and IF-3 are released leaving the mature 70S translation initiation complex. The protein is Translation initiation factor IF-1, chloroplastic of Chaetosphaeridium globosum (Charophycean green alga).